Here is a 419-residue protein sequence, read N- to C-terminus: DNA ligase (419 aa).

Residues M1–N120 form an NTD region. The AD domain stretch occupies residues T121–L317. K151 (N6-AMP-lysine intermediate) is an active-site residue. Residues K318–I419 form an OB domain region.

Belongs to the ATP-dependent DNA ligase family.

The protein localises to the virion. It carries out the reaction ATP + (deoxyribonucleotide)n-3'-hydroxyl + 5'-phospho-(deoxyribonucleotide)m = (deoxyribonucleotide)n+m + AMP + diphosphate.. Its function is as follows. Very low-fidelity DNA ligase that seals nicks in double-stranded DNA during DNA repair. Together with the viral repair DNA polymerase X, fills the single nucleotide gaps generated by the AP endonuclease. It is not essential for viral replication and recombination. Displays a very low adenylation activity towards DNA with 3'-dideoxy- or 3'-amino-terminated nicks compared to regular nick DNA. The sequence is that of DNA ligase from Ornithodoros (relapsing fever ticks).